Here is a 146-residue protein sequence, read N- to C-terminus: 3-dehydroquinate dehydratase (146 aa).

Y22 acts as the Proton acceptor in catalysis. Substrate contacts are provided by N74, H80, and D87. H100 serves as the catalytic Proton donor. Residues 101 to 102 and R111 each bind substrate; that span reads LS.

The protein belongs to the type-II 3-dehydroquinase family. As to quaternary structure, homododecamer.

It carries out the reaction 3-dehydroquinate = 3-dehydroshikimate + H2O. It functions in the pathway metabolic intermediate biosynthesis; chorismate biosynthesis; chorismate from D-erythrose 4-phosphate and phosphoenolpyruvate: step 3/7. Catalyzes a trans-dehydration via an enolate intermediate. The polypeptide is 3-dehydroquinate dehydratase (Clostridium beijerinckii (strain ATCC 51743 / NCIMB 8052) (Clostridium acetobutylicum)).